A 323-amino-acid chain; its full sequence is Acetyl-coenzyme A carboxylase carboxyl transferase subunit alpha (323 aa).

In terms of domain architecture, CoA carboxyltransferase C-terminal spans 39-293 (RLSKKSQQLT…RRALADSLRQ (255 aa)).

It belongs to the AccA family. In terms of assembly, acetyl-CoA carboxylase is a heterohexamer composed of biotin carboxyl carrier protein (AccB), biotin carboxylase (AccC) and two subunits each of ACCase subunit alpha (AccA) and ACCase subunit beta (AccD).

The protein localises to the cytoplasm. It catalyses the reaction N(6)-carboxybiotinyl-L-lysyl-[protein] + acetyl-CoA = N(6)-biotinyl-L-lysyl-[protein] + malonyl-CoA. The protein operates within lipid metabolism; malonyl-CoA biosynthesis; malonyl-CoA from acetyl-CoA: step 1/1. In terms of biological role, component of the acetyl coenzyme A carboxylase (ACC) complex. First, biotin carboxylase catalyzes the carboxylation of biotin on its carrier protein (BCCP) and then the CO(2) group is transferred by the carboxyltransferase to acetyl-CoA to form malonyl-CoA. This Burkholderia lata (strain ATCC 17760 / DSM 23089 / LMG 22485 / NCIMB 9086 / R18194 / 383) protein is Acetyl-coenzyme A carboxylase carboxyl transferase subunit alpha.